Reading from the N-terminus, the 198-residue chain is Putative pseudouridine methyltransferase (198 aa).

S-adenosyl-L-methionine-binding residues include methionine 132 and cysteine 186.

It belongs to the methyltransferase superfamily. TrmY family.

It is found in the cytoplasm. The sequence is that of Putative pseudouridine methyltransferase from Shewanella baltica (strain OS185).